A 499-amino-acid chain; its full sequence is Fumarate hydratase 2 (499 aa).

A disordered region spans residues 19 to 51 (ADVTLKQEDEQQERRSYSTPFREERDTFGPIQV). The span at 23-45 (LKQEDEQQERRSYSTPFREERDT) shows a compositional bias: basic and acidic residues. Residues 134–136 (SGT), 164–167 (HPND), 174–176 (SSN), and Thr-222 each bind substrate. His-223 acts as the Proton donor/acceptor in catalysis. Ser-353 is an active-site residue. Substrate-binding positions include Ser-354 and 359–361 (KVN).

It belongs to the class-II fumarase/aspartase family. Fumarase subfamily. Homotetramer.

It localises to the cytoplasm. It is found in the cytosol. The enzyme catalyses (S)-malate = fumarate + H2O. Its activity is regulated as follows. Fumarate hydratase activity (fumarate to L-malate) is strongly inhibited by phosphoenolpyruvate, citrate, oxaloacetate, ATP and ADP. Malate dehydratase activity (malate to fumarate) is activated by oxaloacetate, Asn and Gln. Malate dehydratase activity (malate to fumarate) is inhibited by citrate, succinate, ADP and ATP. Its function is as follows. Cytosolic fumarate hydratase that catalyzes the reversible stereospecific interconversion of fumarate to L-malate. Catalyzes the dehydration of L-malate to fumarate in the cytosol: required for the massive fumarate accumulation during the day in plants grown under high nitrogen. Also required for acclimation of photosynthesis to cold: acts by mediating accumulation of fumarate at low temperature, leading to reduce accumulation of phosphorylated sugars. This chain is Fumarate hydratase 2, found in Arabidopsis thaliana (Mouse-ear cress).